A 441-amino-acid polypeptide reads, in one-letter code: Histidinol dehydrogenase (441 aa).

Substrate-binding residues include Thr-240, Gln-262, and His-265. Zn(2+)-binding residues include Gln-262 and His-265. Catalysis depends on proton acceptor residues Glu-332 and His-333. Substrate contacts are provided by His-333, Asp-366, Glu-420, and His-425. Asp-366 contributes to the Zn(2+) binding site. His-425 serves as a coordination point for Zn(2+).

It belongs to the histidinol dehydrogenase family. Requires Zn(2+) as cofactor.

The catalysed reaction is L-histidinol + 2 NAD(+) + H2O = L-histidine + 2 NADH + 3 H(+). It participates in amino-acid biosynthesis; L-histidine biosynthesis; L-histidine from 5-phospho-alpha-D-ribose 1-diphosphate: step 9/9. Functionally, catalyzes the sequential NAD-dependent oxidations of L-histidinol to L-histidinaldehyde and then to L-histidine. This chain is Histidinol dehydrogenase, found in Streptomyces avermitilis (strain ATCC 31267 / DSM 46492 / JCM 5070 / NBRC 14893 / NCIMB 12804 / NRRL 8165 / MA-4680).